Consider the following 337-residue polypeptide: 2-oxoglutarate-dependent ethylene/succinate-forming enzyme (337 aa).

The region spanning 166 to 286 is the Fe2OG dioxygenase domain; sequence GWHHMRVLRF…RFACAYFHEP (121 aa). Fe cation-binding residues include His-189 and His-268.

It belongs to the iron/ascorbate-dependent oxidoreductase family. Monomer. Requires Fe(2+) as cofactor.

It carries out the reaction 2-oxoglutarate + O2 + 2 H(+) = ethene + 3 CO2 + H2O. The enzyme catalyses L-arginine + 2-oxoglutarate + O2 = guanidine + L-glutamate 5-semialdehyde + succinate + CO2. The protein operates within alkene biosynthesis; ethylene biosynthesis via 2-oxoglutarate. Simultaneously catalyzes two reactions, namely formation of ethylene and of succinate from 2-oxoglutarate. This is 2-oxoglutarate-dependent ethylene/succinate-forming enzyme (efe) from Pseudomonas syringae pv. pisi.